A 299-amino-acid chain; its full sequence is Probable xyloglucan endotransglucosylase/hydrolase protein 10 (299 aa).

A signal peptide spans 1–29 (MTLINRSKPFVLLVGFSIISSLLLWVSQA). A GH16 domain is found at 30–225 (SVVSSGDFNK…WSKGPFVASF (196 aa)). Residue Asn-51 is glycosylated (N-linked (GlcNAc...) asparagine). Glu-111 functions as the Nucleophile in the catalytic mechanism. The active-site Proton donor is the Glu-115. Residues Glu-115, 128 to 130 (QTN), 138 to 140 (NRE), 204 to 205 (SW), and Gly-209 each bind xyloglucan. 2 disulfides stabilise this stretch: Cys-233/Cys-242 and Cys-280/Cys-294. A glycan (N-linked (GlcNAc...) asparagine) is linked at Asn-238. Arg-285 contributes to the xyloglucan binding site.

The protein belongs to the glycosyl hydrolase 16 family. XTH group 1 subfamily. Post-translationally, contains at least one intrachain disulfide bond essential for its enzymatic activity.

It localises to the secreted. The protein localises to the cell wall. Its subcellular location is the extracellular space. It is found in the apoplast. It carries out the reaction breaks a beta-(1-&gt;4) bond in the backbone of a xyloglucan and transfers the xyloglucanyl segment on to O-4 of the non-reducing terminal glucose residue of an acceptor, which can be a xyloglucan or an oligosaccharide of xyloglucan.. In terms of biological role, catalyzes xyloglucan endohydrolysis (XEH) and/or endotransglycosylation (XET). Cleaves and religates xyloglucan polymers, an essential constituent of the primary cell wall, and thereby participates in cell wall construction of growing tissues. This chain is Probable xyloglucan endotransglucosylase/hydrolase protein 10 (XTH10), found in Arabidopsis thaliana (Mouse-ear cress).